The following is a 360-amino-acid chain: MGLRTPLYELHVALGAKMVDFGGWDMPLHYGSQVEEHHQVRRDCGVFDVSHMTVVDVAGEQATAYLQHLLANDVARLGETGKALYSAMLNEEGGVVDDLIVYLTEHGYRVVVNASTRDKDIAWMQAQAAGFKVDLQERGDLAMLAIQGPNARVHSSELVSPARAALIRELKPFQGRAEGDWFIARTGYTGEDGLEIMLPAAEAPGFLNELVGAGISPAGLGARDTLRLEAGLNLYGQDMDESVSPLAANMGWTVAWEPVARDFVGRRALEAQKAAGDQPKLVGLVLEERGVLRAHQVVRVAGIGEGEITSGSFSPTLNKSIALARVPAATGDRAEVEIRGKWYPVRVVQPSFVRHGKPLI.

It belongs to the GcvT family. In terms of assembly, the glycine cleavage system is composed of four proteins: P, T, L and H.

The enzyme catalyses N(6)-[(R)-S(8)-aminomethyldihydrolipoyl]-L-lysyl-[protein] + (6S)-5,6,7,8-tetrahydrofolate = N(6)-[(R)-dihydrolipoyl]-L-lysyl-[protein] + (6R)-5,10-methylene-5,6,7,8-tetrahydrofolate + NH4(+). Functionally, the glycine cleavage system catalyzes the degradation of glycine. This chain is Aminomethyltransferase, found in Pseudomonas aeruginosa (strain ATCC 15692 / DSM 22644 / CIP 104116 / JCM 14847 / LMG 12228 / 1C / PRS 101 / PAO1).